We begin with the raw amino-acid sequence, 116 residues long: Protein BIC2 (116 aa).

Disordered stretches follow at residues 1–33 (MKNT…TCFP) and 95–116 (DSGD…ESSC).

The protein localises to the nucleus. Regulates the blue-light dependent dimerization of CRY2 and formation of photobodies. Inhibits CRY phosphorylation. The sequence is that of Protein BIC2 from Arabidopsis thaliana (Mouse-ear cress).